Here is a 359-residue protein sequence, read N- to C-terminus: Large ribosomal subunit protein bL27m (359 aa).

A mitochondrion-targeting transit peptide spans 1 to 24; that stretch reads MSFWKVATLWQMPLRPSILVQVRT. The disordered stretch occupies residues 29–48; it reads AAGSRTSMKDSAGRRLGPKK. Over residues 35 to 48 the composition is skewed to basic and acidic residues; sequence SMKDSAGRRLGPKK.

It belongs to the bacterial ribosomal protein bL27 family.

Its subcellular location is the mitochondrion. Component of the large subunit of mitochondrial ribosome. The protein is Large ribosomal subunit protein bL27m (MRPL2) of Eremothecium gossypii (strain ATCC 10895 / CBS 109.51 / FGSC 9923 / NRRL Y-1056) (Yeast).